The sequence spans 717 residues: Catalase-peroxidase (717 aa).

The interval 1–20 is disordered; it reads MSGKCPVMHGGNTSTGTSNK. Residues 11 to 20 are compositionally biased toward polar residues; sequence GNTSTGTSNK. Residues 91–219 constitute a cross-link (tryptophyl-tyrosyl-methioninium (Trp-Tyr) (with M-245)); it reads WHSAGSYRLA…LAAVQMGLIY (129 aa). Catalysis depends on histidine 92, which acts as the Proton acceptor. The tryptophyl-tyrosyl-methioninium (Tyr-Met) (with W-91) cross-link spans 219 to 245; that stretch reads YVNPEGVNGQPDPQKTAEQVRETFARM. Histidine 260 serves as a coordination point for heme b.

It belongs to the peroxidase family. Peroxidase/catalase subfamily. In terms of assembly, homodimer or homotetramer. Heme b serves as cofactor. Formation of the three residue Trp-Tyr-Met cross-link is important for the catalase, but not the peroxidase activity of the enzyme.

The catalysed reaction is H2O2 + AH2 = A + 2 H2O. It carries out the reaction 2 H2O2 = O2 + 2 H2O. In terms of biological role, bifunctional enzyme with both catalase and broad-spectrum peroxidase activity. The polypeptide is Catalase-peroxidase (Chromohalobacter salexigens (strain ATCC BAA-138 / DSM 3043 / CIP 106854 / NCIMB 13768 / 1H11)).